A 428-amino-acid polypeptide reads, in one-letter code: Probable pectin lyase F (428 aa).

The first 20 residues, 1–20 (MVLLHPLLTAAALLGASARA), serve as a signal peptide directing secretion. An intrachain disulfide couples Cys83 to Cys107. The active site involves Arg257. Asn276 carries an N-linked (GlcNAc...) asparagine glycan. A disulfide bond links Cys324 and Cys332. Residues 383-428 (GSGGSGAASSSVSITPSPTSSAIPSSSATPSSSAYARRHYARHHHY) are disordered. The span at 389-417 (AASSSVSITPSPTSSAIPSSSATPSSSAY) shows a compositional bias: low complexity. The span at 418-428 (ARRHYARHHHY) shows a compositional bias: basic residues.

It belongs to the polysaccharide lyase 1 family.

The protein resides in the secreted. The enzyme catalyses Eliminative cleavage of (1-&gt;4)-alpha-D-galacturonan methyl ester to give oligosaccharides with 4-deoxy-6-O-methyl-alpha-D-galact-4-enuronosyl groups at their non-reducing ends.. Functionally, pectinolytic enzymes consist of four classes of enzymes: pectin lyase, polygalacturonase, pectin methylesterase and rhamnogalacturonase. Among pectinolytic enzymes, pectin lyase is the most important in depolymerization of pectin, since it cleaves internal glycosidic bonds of highly methylated pectins. In Aspergillus oryzae (strain ATCC 42149 / RIB 40) (Yellow koji mold), this protein is Probable pectin lyase F (pelF).